Here is a 205-residue protein sequence, read N- to C-terminus: Small ribosomal subunit protein uS4 (205 aa).

Positions 18 to 46 (NIWGRPKSPVNRREYGPGQHGQRRKGKLS) are disordered. An S4 RNA-binding domain is found at 94 to 154 (RRLDTVVFRA…EASKQLAVVL (61 aa)).

This sequence belongs to the universal ribosomal protein uS4 family. Part of the 30S ribosomal subunit. Contacts protein S5. The interaction surface between S4 and S5 is involved in control of translational fidelity.

In terms of biological role, one of the primary rRNA binding proteins, it binds directly to 16S rRNA where it nucleates assembly of the body of the 30S subunit. With S5 and S12 plays an important role in translational accuracy. This Bradyrhizobium sp. (strain ORS 278) protein is Small ribosomal subunit protein uS4.